Consider the following 194-residue polypeptide: HTH-type transcriptional regulator BetI (194 aa).

In terms of domain architecture, HTH tetR-type spans 8–68; it reads PLRRRELIDA…ATMRHLLREL (61 aa). The H-T-H motif DNA-binding region spans 31–50; the sequence is TVAQIAHEAGVSPALAHHYF.

It participates in amine and polyamine biosynthesis; betaine biosynthesis via choline pathway [regulation]. In terms of biological role, repressor involved in the biosynthesis of the osmoprotectant glycine betaine. It represses transcription of the choline transporter BetT and the genes of BetAB involved in the synthesis of glycine betaine. This Brucella anthropi (strain ATCC 49188 / DSM 6882 / CCUG 24695 / JCM 21032 / LMG 3331 / NBRC 15819 / NCTC 12168 / Alc 37) (Ochrobactrum anthropi) protein is HTH-type transcriptional regulator BetI.